The following is a 226-amino-acid chain: Xanthocillin biosynthesis cluster protein F (226 aa).

The protein operates within secondary metabolite biosynthesis. Part of the gene cluster that mediates the biosynthesis of the isocyanide xanthocillin and its derivatives. The first step of the pathway consists in the conversion of tyrosine into a vinyl-isonitrile intermediate by the isocyanide synthase xanB. Subsequent oxidative dimerization of this intermediate to form xanthocillin may involve the cytochrome P450 monooxygenase xanG, whose expression is coregulated with that of XanB. Xanthocillin can be further modified by the isonitrile hydratase-like protein xanA which introduces N-formyl groups and the methyltransferase xanE which introduces methyl groups, leading to the production of several derivatives including fumiformamide. Finally, fumiformamide can be subject to both oxidative and reductive cyclization to yield melanocins E and F, respectively. The polypeptide is Xanthocillin biosynthesis cluster protein F (Aspergillus fumigatus (strain ATCC MYA-4609 / CBS 101355 / FGSC A1100 / Af293) (Neosartorya fumigata)).